The primary structure comprises 397 residues: L-asparaginase-like protein GD25160 (397 aa).

Residues 1–22 form the signal peptide; the sequence is MLAQSCCLRLLILLLLFTSICS. 3 disulfide bridges follow: cysteine 90-cysteine 95, cysteine 189-cysteine 205, and cysteine 344-cysteine 371.

This sequence belongs to the Ntn-hydrolase family.

The chain is L-asparaginase-like protein GD25160 from Drosophila simulans (Fruit fly).